We begin with the raw amino-acid sequence, 272 residues long: Shikimate dehydrogenase (NADP(+)) (272 aa).

Shikimate-binding positions include 14–16 and T61; that span reads SKS. The active-site Proton acceptor is the K65. Residue E77 coordinates NADP(+). N86 and D102 together coordinate shikimate. NADP(+) is bound by residues 126-130, 149-154, and M213; these read GAGGA and NRTYSR. Y215 is a binding site for shikimate. G237 is an NADP(+) binding site.

Belongs to the shikimate dehydrogenase family. Homodimer.

The enzyme catalyses shikimate + NADP(+) = 3-dehydroshikimate + NADPH + H(+). It functions in the pathway metabolic intermediate biosynthesis; chorismate biosynthesis; chorismate from D-erythrose 4-phosphate and phosphoenolpyruvate: step 4/7. Involved in the biosynthesis of the chorismate, which leads to the biosynthesis of aromatic amino acids. Catalyzes the reversible NADPH linked reduction of 3-dehydroshikimate (DHSA) to yield shikimate (SA). The chain is Shikimate dehydrogenase (NADP(+)) from Enterobacter sp. (strain 638).